The following is a 195-amino-acid chain: UPF0215 protein TSIB_1161 (195 aa).

The protein belongs to the UPF0215 family.

The protein is UPF0215 protein TSIB_1161 of Thermococcus sibiricus (strain DSM 12597 / MM 739).